Reading from the N-terminus, the 396-residue chain is Zinc metalloproteinase nas-19 (396 aa).

The signal sequence occupies residues 1–20; sequence MVRLIHLIGAIILLFSYAYC. Positions 38 to 231 constitute a Peptidase M12A domain; it reads RVKRQFERLG…YKINQYYGCW (194 aa). Asn79 is a glycosylation site (N-linked (GlcNAc...) asparagine). 4 cysteine pairs are disulfide-bonded: Cys82–Cys230, Cys105–Cys130, Cys232–Cys252, and Cys254–Cys263. Residue His138 participates in Zn(2+) binding. Residue Glu139 is part of the active site. Positions 142 and 148 each coordinate Zn(2+). Positions 225-264 constitute an EGF-like domain; that stretch reads NQYYGCWCSKQLECKNGGYTSPSDCSRCNCPKGFFGNLCD. Asn310 is a glycosylation site (N-linked (GlcNAc...) asparagine).

Zn(2+) is required as a cofactor.

Its subcellular location is the secreted. In terms of biological role, metalloprotease. This Caenorhabditis elegans protein is Zinc metalloproteinase nas-19 (nas-19).